Here is a 225-residue protein sequence, read N- to C-terminus: Ribonuclease 3 (225 aa).

Residues 2–128 (LSTLIKKLKI…LFGAIYLDLG (127 aa)) form the RNase III domain. E43 is a Mg(2+) binding site. D47 is an active-site residue. Positions 114 and 117 each coordinate Mg(2+). The active site involves E117. In terms of domain architecture, DRBM spans 152–220 (DFKTQLQELV…ARYVLNILSK (69 aa)).

It belongs to the ribonuclease III family. In terms of assembly, homodimer. It depends on Mg(2+) as a cofactor.

It localises to the cytoplasm. The enzyme catalyses Endonucleolytic cleavage to 5'-phosphomonoester.. Functionally, digests double-stranded RNA. Involved in the processing of primary rRNA transcript to yield the immediate precursors to the large and small rRNAs (23S and 16S). Processes some mRNAs, and tRNAs when they are encoded in the rRNA operon. Processes pre-crRNA and tracrRNA of type II CRISPR loci if present in the organism. The sequence is that of Ribonuclease 3 from Phytoplasma mali (strain AT).